Consider the following 157-residue polypeptide: MPVDPEKLAKLQKSTAKKVGGSRVKAKKGVKTEQDDTKLIETLGKLKATKIEGVEEANFFKDDGKVLHFNRVGVQGAPAANTFAFTGYPQEKNITQLIPQILPQLGAENLEILRQLAEQIQAGKNPKDFGAAGEAGATEEANEDIPDLVDQKFDDVE.

The tract at residues 1–31 is disordered; the sequence is MPVDPEKLAKLQKSTAKKVGGSRVKAKKGVK. Positions 33–98 constitute an NAC-A/B domain; that stretch reads EQDDTKLIET…PQEKNITQLI (66 aa). Residues 125–157 are disordered; sequence NPKDFGAAGEAGATEEANEDIPDLVDQKFDDVE. Residues 130–139 are compositionally biased toward low complexity; it reads GAAGEAGATE.

It belongs to the NAC-beta family. As to quaternary structure, part of the nascent polypeptide-associated complex (NAC), consisting of EGD2 and EGD1. NAC associates with ribosomes via EGD1.

It localises to the cytoplasm. It is found in the nucleus. Functionally, component of the nascent polypeptide-associated complex (NAC), a dynamic component of the ribosomal exit tunnel, protecting the emerging polypeptides from interaction with other cytoplasmic proteins to ensure appropriate nascent protein targeting. The NAC complex also promotes mitochondrial protein import by enhancing productive ribosome interactions with the outer mitochondrial membrane and blocks the inappropriate interaction of ribosomes translating non-secretory nascent polypeptides with translocation sites in the membrane of the endoplasmic reticulum. EGD1 may act as a transcription factor that exert a negative effect on the expression of several genes that are transcribed by RNA polymerase II. This chain is Nascent polypeptide-associated complex subunit beta (EGD1), found in Lodderomyces elongisporus (strain ATCC 11503 / CBS 2605 / JCM 1781 / NBRC 1676 / NRRL YB-4239) (Yeast).